A 277-amino-acid chain; its full sequence is Formamidopyrimidine-DNA glycosylase (277 aa).

Pro-2 functions as the Schiff-base intermediate with DNA in the catalytic mechanism. The active-site Proton donor is Glu-3. Residue Lys-58 is the Proton donor; for beta-elimination activity of the active site. DNA contacts are provided by His-95, Arg-113, and Arg-158. An FPG-type zinc finger spans residues 243–277 (GVYDRANQPCLRCGGVVRQIRQAGRSTYYCTGCQH). The active-site Proton donor; for delta-elimination activity is the Arg-267.

The protein belongs to the FPG family. As to quaternary structure, monomer. It depends on Zn(2+) as a cofactor.

The enzyme catalyses Hydrolysis of DNA containing ring-opened 7-methylguanine residues, releasing 2,6-diamino-4-hydroxy-5-(N-methyl)formamidopyrimidine.. It carries out the reaction 2'-deoxyribonucleotide-(2'-deoxyribose 5'-phosphate)-2'-deoxyribonucleotide-DNA = a 3'-end 2'-deoxyribonucleotide-(2,3-dehydro-2,3-deoxyribose 5'-phosphate)-DNA + a 5'-end 5'-phospho-2'-deoxyribonucleoside-DNA + H(+). Involved in base excision repair of DNA damaged by oxidation or by mutagenic agents. Acts as a DNA glycosylase that recognizes and removes damaged bases. Has a preference for oxidized purines, such as 7,8-dihydro-8-oxoguanine (8-oxoG). Has AP (apurinic/apyrimidinic) lyase activity and introduces nicks in the DNA strand. Cleaves the DNA backbone by beta-delta elimination to generate a single-strand break at the site of the removed base with both 3'- and 5'-phosphates. This chain is Formamidopyrimidine-DNA glycosylase, found in Dechloromonas aromatica (strain RCB).